We begin with the raw amino-acid sequence, 295 residues long: Nucleotide-binding protein LSL_1171 (295 aa).

ATP is bound at residue 13–20; that stretch reads GMSGAGKT. 63-66 provides a ligand contact to GTP; it reads DLRS.

The protein belongs to the RapZ-like family.

Functionally, displays ATPase and GTPase activities. In Ligilactobacillus salivarius (strain UCC118) (Lactobacillus salivarius), this protein is Nucleotide-binding protein LSL_1171.